We begin with the raw amino-acid sequence, 284 residues long: Bifunctional protein FolD 1 (284 aa).

NADP(+) is bound by residues 164–166 (GRS), serine 189, and isoleucine 230.

This sequence belongs to the tetrahydrofolate dehydrogenase/cyclohydrolase family. In terms of assembly, homodimer.

The catalysed reaction is (6R)-5,10-methylene-5,6,7,8-tetrahydrofolate + NADP(+) = (6R)-5,10-methenyltetrahydrofolate + NADPH. The enzyme catalyses (6R)-5,10-methenyltetrahydrofolate + H2O = (6R)-10-formyltetrahydrofolate + H(+). It functions in the pathway one-carbon metabolism; tetrahydrofolate interconversion. Catalyzes the oxidation of 5,10-methylenetetrahydrofolate to 5,10-methenyltetrahydrofolate and then the hydrolysis of 5,10-methenyltetrahydrofolate to 10-formyltetrahydrofolate. The chain is Bifunctional protein FolD 1 from Rubrobacter xylanophilus (strain DSM 9941 / JCM 11954 / NBRC 16129 / PRD-1).